The chain runs to 905 residues: Translation initiation factor IF-2 (905 aa).

The span at 50-62 (HYEAKGGEDKAAE) shows a compositional bias: basic and acidic residues. The segment at 50-306 (HYEAKGGEDK…QKHEVGGVRL (257 aa)) is disordered. Positions 63–75 (KNAPAATPASASK) are enriched in low complexity. The span at 89 to 125 (GPKPSAAPKPGAAPKPGGAPKPGGAPKPGATPKPGGA) shows a compositional bias: pro residues. Positions 161–171 (PFSTGSSSDRP) are enriched in low complexity. The segment covering 233–276 (GSGGGGRGRGGRGGGPGHGGPGHGGFRGRGGRRGGTAGAFGRPG) has biased composition (gly residues). A compositionally biased stretch (basic residues) spans 280–290 (RRGKKSKRQKR). The segment covering 291-302 (HEFEEQQKHEVG) has biased composition (basic and acidic residues). Residues 401 to 575 (KRPPVVTVMG…LTADAALELT (175 aa)) enclose the tr-type G domain. Residues 410–417 (GHVDHGKT) are G1. 410 to 417 (GHVDHGKT) lines the GTP pocket. The tract at residues 435-439 (GITQG) is G2. The G3 stretch occupies residues 460 to 463 (DTPG). GTP contacts are provided by residues 460–464 (DTPGH) and 514–517 (NKID). The segment at 514-517 (NKID) is G4. The G5 stretch occupies residues 550–552 (SAK).

Belongs to the TRAFAC class translation factor GTPase superfamily. Classic translation factor GTPase family. IF-2 subfamily.

Its subcellular location is the cytoplasm. One of the essential components for the initiation of protein synthesis. Protects formylmethionyl-tRNA from spontaneous hydrolysis and promotes its binding to the 30S ribosomal subunits. Also involved in the hydrolysis of GTP during the formation of the 70S ribosomal complex. The chain is Translation initiation factor IF-2 from Corynebacterium aurimucosum (strain ATCC 700975 / DSM 44827 / CIP 107346 / CN-1) (Corynebacterium nigricans).